The following is a 140-amino-acid chain: Putative pre-16S rRNA nuclease (140 aa).

The protein belongs to the YqgF nuclease family.

The protein localises to the cytoplasm. Its function is as follows. Could be a nuclease involved in processing of the 5'-end of pre-16S rRNA. In Mycoplasma pneumoniae (strain ATCC 29342 / M129 / Subtype 1) (Mycoplasmoides pneumoniae), this protein is Putative pre-16S rRNA nuclease.